Consider the following 366-residue polypeptide: Protein FAM131A (366 aa).

Residues 342 to 366 (QRQASDLASSGVVSLDEDEAEPEEQ) form a disordered region. Residues 356–366 (LDEDEAEPEEQ) are compositionally biased toward acidic residues.

It belongs to the FAM131 family.

This chain is Protein FAM131A (FAM131A), found in Homo sapiens (Human).